We begin with the raw amino-acid sequence, 1384 residues long: DNA-directed RNA polymerase subunit beta (1384 aa).

Belongs to the RNA polymerase beta chain family. The RNAP catalytic core consists of 2 alpha, 1 beta, 1 beta' and 1 omega subunit. When a sigma factor is associated with the core the holoenzyme is formed, which can initiate transcription.

The enzyme catalyses RNA(n) + a ribonucleoside 5'-triphosphate = RNA(n+1) + diphosphate. In terms of biological role, DNA-dependent RNA polymerase catalyzes the transcription of DNA into RNA using the four ribonucleoside triphosphates as substrates. The polypeptide is DNA-directed RNA polymerase subunit beta (Xylella fastidiosa (strain M23)).